A 263-amino-acid chain; its full sequence is L-erythrulose-1-phosphate isomerase (263 aa).

His106 serves as the catalytic Electrophile. The active-site Proton acceptor is the Glu178.

It belongs to the triosephosphate isomerase family.

The catalysed reaction is L-erythrulose 1-phosphate = D-erythrulose 4-phosphate. The protein operates within carbohydrate metabolism; L-threitol degradation. Its function is as follows. Catalyzes the isomerization of L-erythrulose-1P to D-erythrulose-4P. Involved in the degradation pathway of L-threitol, that allows M.smegmatis to grow on this compound as the sole carbon source. This chain is L-erythrulose-1-phosphate isomerase, found in Mycolicibacterium smegmatis (strain ATCC 700084 / mc(2)155) (Mycobacterium smegmatis).